We begin with the raw amino-acid sequence, 1091 residues long: Voltage-dependent calcium channel subunit alpha-2/delta-3 (1091 aa).

Residues 1–33 (MAGPGSLCCASRGASALLATALLYAALGDVVRS) form the signal peptide. Topologically, residues 34–1068 (EQQIPLSVVK…HPEENARECG (1035 aa)) are extracellular. Residue asparagine 166 is glycosylated (N-linked (GlcNAc...) asparagine). A VWFA domain is found at 256 to 438 (DVVILVDVSG…ENVMEYLHVL (183 aa)). 3 residues coordinate a divalent metal cation: aspartate 262, serine 264, and serine 266. Residues 262–266 (DVSGS) carry the MIDAS-like motif motif. Asparagine 309 carries an N-linked (GlcNAc...) asparagine glycan. An intrachain disulfide couples cysteine 412 to cysteine 1055. Positions 452-549 (WTEAYIDSTL…RPLYEEGKKR (98 aa)) constitute a Cache domain. N-linked (GlcNAc...) asparagine glycans are attached at residues asparagine 553 and asparagine 632. Phosphotyrosine is present on tyrosine 924. The helical transmembrane segment at 1069 to 1089 (GASSLQAQAALLLLPLVSSLF) threads the bilayer. Residues 1090 to 1091 (SR) lie on the Cytoplasmic side of the membrane.

This sequence belongs to the calcium channel subunit alpha-2/delta family. As to quaternary structure, dimer formed of alpha-2-2 and delta-2 chains; disulfide-linked. Voltage-dependent calcium channels are multisubunit complexes, consisting of alpha-1 (CACNA1), alpha-2 (CACNA2D), beta (CACNB) and delta (CACNA2D) subunits in a 1:1:1:1 ratio. Post-translationally, N-glycosylated. May be proteolytically processed into subunits alpha-2-3 and delta-3 that are disulfide-linked. It is however unclear whether such cleavage really takes place in vivo and has a functional role. As to expression, brain-specific. Predominantly expressed in the caudate putamen, entorhinal complex, hippocampus and cortex.

Its subcellular location is the membrane. Its function is as follows. The alpha-2/delta subunit of voltage-dependent calcium channels regulates calcium current density and activation/inactivation kinetics of the calcium channel. Acts as a regulatory subunit for P/Q-type calcium channel (CACNA1A), N-type (CACNA1B), L-type (CACNA1C OR CACNA1D) but not T-type (CACNA1G). The protein is Voltage-dependent calcium channel subunit alpha-2/delta-3 (Cacna2d3) of Mus musculus (Mouse).